The chain runs to 235 residues: Protein YIP4 (235 aa).

5 consecutive transmembrane segments (helical) span residues 89-109 (ISAN…SLFV), 114-134 (SLFS…ALHL), 145-165 (LISY…NALV), 186-206 (VLSL…VAAV), and 215-235 (IIEI…STIL).

This sequence belongs to the YIP1 family. In terms of assembly, interacts with TVP18, TVP23, YIP1 and YIP5. Interacts with SEC4, YPT1, YPT6, YPT7, YPT10, YPT11, YPT31, YPT32 and YPT52; These proteins are all Rab GTPases.

Its subcellular location is the golgi apparatus membrane. Functionally, may be involved in proper membrane localization of Rab GTPases. This Saccharomyces cerevisiae (strain ATCC 204508 / S288c) (Baker's yeast) protein is Protein YIP4 (YIP4).